The chain runs to 153 residues: Insulin-like growth factor 1 (153 aa).

Positions 49-77 are b; sequence GPETLCGAELVDALQFVCGDRGFYFNKPT. Cystine bridges form between Cys54–Cys96, Cys66–Cys109, and Cys95–Cys100. Positions 78 to 89 are c; sequence GYGSSSRRAPQT. The tract at residues 90-110 is a; it reads GIVDECCFRSCDLRRLEMYCA. The segment at 111 to 118 is d; the sequence is PLKPAKSA. Positions 119–153 are cleaved as a propeptide — e peptide; it reads RSVRAQRHTDMPKAQKEVHLKNASRGSAGNKNYRM. The interval 120-153 is disordered; it reads SVRAQRHTDMPKAQKEVHLKNASRGSAGNKNYRM. The span at 125 to 138 shows a compositional bias: basic and acidic residues; it reads RHTDMPKAQKEVHL. The span at 142–153 shows a compositional bias: polar residues; it reads SRGSAGNKNYRM.

The protein belongs to the insulin family. Forms a ternary complex with IGFR1 and ITGAV:ITGB3. Forms a ternary complex with IGFR1 and ITGA6:ITGB4. Forms a ternary complex with IGFBP3 and ALS.

The protein resides in the secreted. Its function is as follows. The insulin-like growth factors, isolated from plasma, are structurally and functionally related to insulin but have a much higher growth-promoting activity. May be a physiological regulator of [1-14C]-2-deoxy-D-glucose (2DG) transport and glycogen synthesis in osteoblasts. Stimulates glucose transport in bone-derived osteoblastic (PyMS) cells and is effective at much lower concentrations than insulin, not only regarding glycogen and DNA synthesis but also with regard to enhancing glucose uptake. May play a role in synapse maturation. Ca(2+)-dependent exocytosis of IGF1 is required for sensory perception of smell in the olfactory bulb. Acts as a ligand for IGF1R. Binds to the alpha subunit of IGF1R, leading to the activation of the intrinsic tyrosine kinase activity which autophosphorylates tyrosine residues in the beta subunit thus initiating a cascade of down-stream signaling events leading to activation of the PI3K-AKT/PKB and the Ras-MAPK pathways. Binds to integrins ITGAV:ITGB3 and ITGA6:ITGB4. Its binding to integrins and subsequent ternary complex formation with integrins and IGFR1 are essential for IGF1 signaling. Induces the phosphorylation and activation of IGFR1, MAPK3/ERK1, MAPK1/ERK2 and AKT1. As part of the MAPK/ERK signaling pathway, acts as a negative regulator of apoptosis in cardiomyocytes via promotion of STUB1/CHIP-mediated ubiquitination and degradation of ICER-type isoforms of CREM. In Rhinopithecus roxellana (Golden snub-nosed monkey), this protein is Insulin-like growth factor 1.